Reading from the N-terminus, the 262-residue chain is Expansin-A21 (262 aa).

The signal sequence occupies residues 1-29 (MKLLEKMTYVECFMIIMATWFMFISYSHG). An Expansin-like EG45 domain is found at 64 to 169 (EGACGYGDLN…RRVPCAKTGG (106 aa)). An Expansin-like CBD domain is found at 179–258 (NILTILPYNV…SWGFGQTFDG (80 aa)).

Belongs to the expansin family. Expansin A subfamily.

Its subcellular location is the secreted. It is found in the cell wall. It localises to the membrane. Its function is as follows. Causes loosening and extension of plant cell walls by disrupting non-covalent bonding between cellulose microfibrils and matrix glucans. No enzymatic activity has been found. The chain is Expansin-A21 (EXPA21) from Arabidopsis thaliana (Mouse-ear cress).